A 192-amino-acid polypeptide reads, in one-letter code: uncharacterized protein (192 aa).

The region spanning His-29 to Ser-160 is the Nudix hydrolase domain. Residues Gly-67–Ala-89 carry the Nudix box motif. Mg(2+) contacts are provided by Glu-83 and Glu-87.

Belongs to the Nudix hydrolase family. PCD1 subfamily. Requires Mn(2+) as cofactor. The cofactor is Mg(2+).

Its function is as follows. Probably mediates the hydrolysis of some nucleoside diphosphate derivatives. This is an uncharacterized protein from Escherichia coli (strain K12).